The chain runs to 160 residues: 6,7-dimethyl-8-ribityllumazine synthase (160 aa).

Residues Trp27, 59-61, and 81-83 contribute to the 5-amino-6-(D-ribitylamino)uracil site; these read AIE and VVI. 86-87 contacts (2S)-2-hydroxy-3-oxobutyl phosphate; sequence QT. The Proton donor role is filled by His89. Asn114 is a binding site for 5-amino-6-(D-ribitylamino)uracil. Residue Arg128 coordinates (2S)-2-hydroxy-3-oxobutyl phosphate.

Belongs to the DMRL synthase family. In terms of assembly, homopentamer.

It carries out the reaction (2S)-2-hydroxy-3-oxobutyl phosphate + 5-amino-6-(D-ribitylamino)uracil = 6,7-dimethyl-8-(1-D-ribityl)lumazine + phosphate + 2 H2O + H(+). The protein operates within cofactor biosynthesis; riboflavin biosynthesis; riboflavin from 2-hydroxy-3-oxobutyl phosphate and 5-amino-6-(D-ribitylamino)uracil: step 1/2. Its function is as follows. Catalyzes the formation of 6,7-dimethyl-8-ribityllumazine by condensation of 5-amino-6-(D-ribitylamino)uracil with 3,4-dihydroxy-2-butanone 4-phosphate. This is the penultimate step in the biosynthesis of riboflavin. In Mycobacterium sp. (strain JLS), this protein is 6,7-dimethyl-8-ribityllumazine synthase.